Consider the following 299-residue polypeptide: Putative ammonium transporter 4 member 1 (299 aa).

Transmembrane regions (helical) follow at residues 16 to 36, 59 to 79, 104 to 124, 158 to 178, and 218 to 238; these read AWPL…LVIL, VLLT…GFNG, LLVW…ISAV, VLHT…LLLL, and AGIA…CLAV.

It belongs to the ammonia transporter channel (TC 1.A.11.2) family.

The protein resides in the membrane. This Oryza sativa subsp. japonica (Rice) protein is Putative ammonium transporter 4 member 1 (AMT4-1).